We begin with the raw amino-acid sequence, 223 residues long: Small ribosomal subunit protein uS5 (223 aa).

The disordered stretch occupies residues 1-66 (MPPQQQRGRG…AERAQAETEF (66 aa)). The segment covering 13–22 (RGPGGPGGPG) has biased composition (gly residues). The span at 53–66 (GGDKAERAQAETEF) shows a compositional bias: basic and acidic residues. The S5 DRBM domain maps to 66–129 (FQERVVQIRR…SDARKALIRV (64 aa)).

This sequence belongs to the universal ribosomal protein uS5 family. Part of the 30S ribosomal subunit. Contacts proteins S4 and S8.

With S4 and S12 plays an important role in translational accuracy. Its function is as follows. Located at the back of the 30S subunit body where it stabilizes the conformation of the head with respect to the body. In Gloeobacter violaceus (strain ATCC 29082 / PCC 7421), this protein is Small ribosomal subunit protein uS5.